A 1113-amino-acid chain; its full sequence is Poly(A) RNA polymerase gld-2 (1113 aa).

4 disordered regions span residues 1 to 113 (MVMA…PKYH), 134 to 175 (RPIF…PTQP), 205 to 266 (LYRS…GQDP), and 445 to 513 (LDDE…DEST). A compositionally biased stretch (low complexity) spans 22-52 (SPSVDSVSRVQQQSGGFAFYNQQSNHQYQQS). Residues 60–106 (SRDGNTGYYNNHSGNKRQTYNNQRGGRSYNHRGNSNYQQNGEYSGNQ) are compositionally biased toward polar residues. The segment covering 149–172 (RRSSPPSPSALSSSTANSTSNRAP) has biased composition (low complexity). Pro residues predominate over residues 223 to 233 (YKQPPPQPPST). Over residues 451–485 (GADHDKTIDENRRRIHKSQEPRIGTEEKALNELPR) the composition is skewed to basic and acidic residues. The span at 492–507 (SSCSSISSVSESSSPS) shows a compositional bias: low complexity. Residues Asp606 and Asp608 each contribute to the Mg(2+) site. One can recognise a PAP-associated domain in the interval 780-816 (TLGELLIGFLDYYANEFNYDRDAISIRQGRRVERAAL). Disordered stretches follow at residues 817–854 (AVRP…GIPM) and 966–1113 (GPGH…NVSQ). The segment covering 972–994 (YQQQSNQNLSRPQRPGSNQGYQM) has biased composition (polar residues). Composition is skewed to low complexity over residues 995–1035 (NNNR…SRSN) and 1044–1061 (QQNS…KENV). Over residues 1069–1084 (VDKKQQNSNRKDDGNR) the composition is skewed to basic and acidic residues.

Belongs to the DNA polymerase type-B-like family. GLD2 subfamily. In terms of assembly, interacts with gld-3. It depends on Mg(2+) as a cofactor. Mn(2+) serves as cofactor. In terms of tissue distribution, germline-specific.

It is found in the cytoplasm. It carries out the reaction RNA(n) + ATP = RNA(n)-3'-adenine ribonucleotide + diphosphate. Its function is as follows. Cytoplasmic poly(A) RNA polymerase that adds successive AMP monomers to the 3'-end of specific RNAs, forming a poly(A) tail. Acts as a regulator of mitosis/meiosis required for progression through meiotic prophase during oogenesis and spermatogenesis and for promotion of the entry into meiosis from the mitotic cell cycle. May act by regulating and activating gld-1 mRNA activity in germline. Required for polyadenylation of neg-1 mRNA during embryogenesis. The chain is Poly(A) RNA polymerase gld-2 (gld-2) from Caenorhabditis elegans.